A 144-amino-acid chain; its full sequence is Large ribosomal subunit protein uL13 (144 aa).

Belongs to the universal ribosomal protein uL13 family. In terms of assembly, part of the 50S ribosomal subunit.

In terms of biological role, this protein is one of the early assembly proteins of the 50S ribosomal subunit, although it is not seen to bind rRNA by itself. It is important during the early stages of 50S assembly. The protein is Large ribosomal subunit protein uL13 of Mycoplasmopsis pulmonis (strain UAB CTIP) (Mycoplasma pulmonis).